Here is a 342-residue protein sequence, read N- to C-terminus: tRNA N6-adenosine threonylcarbamoyltransferase (342 aa).

The Fe cation site is built by His120 and His124. Substrate contacts are provided by residues 142-146 (VVSGG), Asp175, Gly188, Asp192, and Asn281. Residue Asp310 participates in Fe cation binding.

Belongs to the KAE1 / TsaD family. The cofactor is Fe(2+).

Its subcellular location is the cytoplasm. The enzyme catalyses L-threonylcarbamoyladenylate + adenosine(37) in tRNA = N(6)-L-threonylcarbamoyladenosine(37) in tRNA + AMP + H(+). Its function is as follows. Required for the formation of a threonylcarbamoyl group on adenosine at position 37 (t(6)A37) in tRNAs that read codons beginning with adenine. Is involved in the transfer of the threonylcarbamoyl moiety of threonylcarbamoyl-AMP (TC-AMP) to the N6 group of A37, together with TsaE and TsaB. TsaD likely plays a direct catalytic role in this reaction. In Geobacillus kaustophilus (strain HTA426), this protein is tRNA N6-adenosine threonylcarbamoyltransferase.